The sequence spans 104 residues: Phosphoribosyl-ATP pyrophosphatase (104 aa).

The protein belongs to the PRA-PH family.

The protein localises to the cytoplasm. It carries out the reaction 1-(5-phospho-beta-D-ribosyl)-ATP + H2O = 1-(5-phospho-beta-D-ribosyl)-5'-AMP + diphosphate + H(+). The protein operates within amino-acid biosynthesis; L-histidine biosynthesis; L-histidine from 5-phospho-alpha-D-ribose 1-diphosphate: step 2/9. In Allorhizobium ampelinum (strain ATCC BAA-846 / DSM 112012 / S4) (Agrobacterium vitis (strain S4)), this protein is Phosphoribosyl-ATP pyrophosphatase.